Here is a 312-residue protein sequence, read N- to C-terminus: Ribosomal large subunit pseudouridine synthase D (312 aa).

The S4 RNA-binding domain occupies 18 to 87; sequence QRLDLVLSKL…IPENIFLDIV (70 aa). Residue aspartate 139 is part of the active site.

This sequence belongs to the pseudouridine synthase RluA family.

It localises to the cytoplasm. It catalyses the reaction uridine(1911/1915/1917) in 23S rRNA = pseudouridine(1911/1915/1917) in 23S rRNA. Responsible for synthesis of pseudouridine from uracil at positions 1911, 1915 and 1917 in 23S ribosomal RNA. In Buchnera aphidicola subsp. Acyrthosiphon pisum (strain APS) (Acyrthosiphon pisum symbiotic bacterium), this protein is Ribosomal large subunit pseudouridine synthase D (rluD).